The primary structure comprises 86 residues: Omega-theraphotoxin-Hhn1a 1 (86 aa).

Residues methionine 1–alanine 21 form the signal peptide. Residues serine 22 to arginine 50 constitute a propeptide that is removed on maturation. Intrachain disulfides connect cysteine 52–cysteine 66, cysteine 59–cysteine 71, and cysteine 65–cysteine 78.

The protein belongs to the neurotoxin 10 (Hwtx-1) family. 17 (Hntx-9) subfamily. As to expression, expressed by the venom gland.

The protein resides in the secreted. Ion channel inhibitor. The polypeptide is Omega-theraphotoxin-Hhn1a 1 (Cyriopagopus hainanus (Chinese bird spider)).